A 132-amino-acid polypeptide reads, in one-letter code: uncharacterized protein (132 aa).

The helical transmembrane segment at Leu-10–Asp-30 threads the bilayer. Residues Lys-50–Ala-79 are a coiled coil.

Its subcellular location is the membrane. This is an uncharacterized protein from Invertebrate iridescent virus 6 (IIV-6).